The primary structure comprises 142 residues: ATP synthase epsilon chain (142 aa).

It belongs to the ATPase epsilon chain family. In terms of assembly, F-type ATPases have 2 components, CF(1) - the catalytic core - and CF(0) - the membrane proton channel. CF(1) has five subunits: alpha(3), beta(3), gamma(1), delta(1), epsilon(1). CF(0) has three main subunits: a, b and c.

It is found in the cell inner membrane. Functionally, produces ATP from ADP in the presence of a proton gradient across the membrane. The chain is ATP synthase epsilon chain from Shewanella halifaxensis (strain HAW-EB4).